The chain runs to 842 residues: Netrin receptor UNC5A (842 aa).

Residues 1–25 (MAVRPGLWPALLGIVLAAWLRGSGA) form the signal peptide. Residues 26–306 (QQSATVANPV…ASGPEDVALY (281 aa)) are Extracellular-facing. Residues 44-141 (PHFLVEPEDV…SGTTKSQKAY (98 aa)) enclose the Ig-like domain. Cystine bridges form between Cys65–Cys126, Cys77–Cys124, and Cys170–Cys221. 2 N-linked (GlcNAc...) asparagine glycosylation sites follow: Asn107 and Asn218. The region spanning 155 to 234 (PLAKEVSLEQ…NIVARRRSAS (80 aa)) is the Ig-like C2-type domain. The TSP type-1 domain maps to 242-294 (DGSWSPWSKWSACGLDCTHWRSRECSDPAPRNGGEECQGTDLDTRNCTSDLCV). C-linked (Man) tryptophan glycans are attached at residues Trp245, Trp248, and Trp251. Disulfide bonds link Cys254–Cys288, Cys258–Cys293, and Cys266–Cys278. Asn287 carries an N-linked (GlcNAc...) asparagine glycan. Residues 307–327 (VGLIAVAVCLVLLLLVLILVY) form a helical membrane-spanning segment. Residues 328-842 (CRKKEGLDSD…GLFTVSEAEC (515 aa)) lie on the Cytoplasmic side of the membrane. The ZU5 domain maps to 441–584 (NMTYGTFNFL…LGRFALVGEA (144 aa)). The segment at 605–623 (SLEYNIRVYCLHDTHDALK) is interaction with DCC. Positions 761–841 (QKIISSLDPP…AGLFTVSEAE (81 aa)) constitute a Death domain.

This sequence belongs to the unc-5 family. As to quaternary structure, homodimer and homooligomer. Interacts with the cytoplasmic part of DCC. Interacts with MAGED1. Interacts with PRKCABP, possibly mediating some interaction with PKC. Interacts (via extracellular domain) with FLRT2 (via extracellular domain). Interacts (via extracellular domain) with FLRT3 (via extracellular domain). In terms of processing, phosphorylated on cytoplasmic tyrosine residues. Phosphorylated by PKC in vitro. Post-translationally, proteolytically cleaved by caspases during apoptosis. The cleavage does not take place when the receptor is associated with netrin ligand. Its cleavage by caspases is required to induce apoptosis. The two extracellular TSRs of UNC5A contain WxxWxxWxxC motifs that can be C-mannosylated on all tryptophans. DPY19L1 preferentially mannosylates the first two tryptophans and DPY19L3 prefers the third. C-mannosylation by DPY19L1 is required for transport of UNC5A from the endoplasmic reticulum to the cell surface.

The protein resides in the cell membrane. It is found in the membrane raft. It localises to the cell projection. The protein localises to the neuron projection. Its function is as follows. Receptor for netrin required for axon guidance. Functions in the netrin signaling pathway and promotes neurite outgrowth in response to NTN1. Mediates axon repulsion of neuronal growth cones in the developing nervous system in response to netrin. Axon repulsion in growth cones may be mediated by its association with DCC that may trigger signaling for repulsion. It also acts as a dependence receptor required for apoptosis induction when not associated with netrin ligand. The polypeptide is Netrin receptor UNC5A (UNC5A) (Homo sapiens (Human)).